We begin with the raw amino-acid sequence, 442 residues long: C4-dicarboxylate transport protein 4 (442 aa).

6 consecutive transmembrane segments (helical) span residues 20-40 (ILYVQVLIAIVLGVLIGYFYP), 53-73 (FIALIKMMIAPVIFCTVVHGI), 90-110 (LIYFESVSTVALAVGLLVGEV), 160-180 (GDLLQVLLISILSGFAIAFLG), 209-229 (PVGAFGAMAFTVGAYGLGSLL), and 233-253 (ALIGTFYLTSILFVLIVLGAI).

The protein belongs to the dicarboxylate/amino acid:cation symporter (DAACS) (TC 2.A.23) family.

It localises to the cell inner membrane. Its function is as follows. Responsible for the transport of dicarboxylates such as succinate, fumarate, and malate from the periplasm across the membrane. The polypeptide is C4-dicarboxylate transport protein 4 (Bradyrhizobium diazoefficiens (strain JCM 10833 / BCRC 13528 / IAM 13628 / NBRC 14792 / USDA 110)).